The chain runs to 176 residues: HTH-type transcriptional regulator DctR (176 aa).

An HTH luxR-type domain is found at 109 to 174 (VPEAAVSLSR…ELVRHQHIDY (66 aa)). The segment at residues 133–152 (TEDILEKLKISLKTFYCHKH) is a DNA-binding region (H-T-H motif).

In terms of biological role, may act as a transcriptional regulator of dctA. This chain is HTH-type transcriptional regulator DctR (dctR), found in Escherichia coli (strain K12).